The chain runs to 635 residues: Early transcription factor 70 kDa subunit (635 aa).

Positions 32–185 (RSIIDENKSV…SNIISLMSDE (154 aa)) constitute a Helicase ATP-binding domain. 45 to 52 (HIMGSGKT) contacts ATP. The short motif at 135–138 (DEAH) is the DEXH box element. In terms of domain architecture, Helicase C-terminal spans 326 to 505 (KFKYFIGKIT…TLPFDIKKLL (180 aa)).

The protein belongs to the helicase family. VETF subfamily. In terms of assembly, heterodimer of a 70 kDa and a 82 kDa subunit.

It localises to the virion. Functionally, acts with RNA polymerase to initiate transcription from early gene promoters. A DNA-dependent ATPase activity is associated with VETF. This chain is Early transcription factor 70 kDa subunit (VETFS), found in Erythrocebus patas (Red guenon).